The following is a 187-amino-acid chain: uncharacterized protein (187 aa).

It belongs to the isochorismatase family.

This is an uncharacterized protein from Bacillus subtilis (strain 168).